Here is a 1246-residue protein sequence, read N- to C-terminus: Superkiller complex protein 2 (1246 aa).

A disordered region spans residues 220–246; that stretch reads LGGGDEDENEAVGQPGGPRGDTVSASP. Phosphoserine is present on residues Ser245 and Ser256. The region spanning 319 to 475 is the Helicase ATP-binding domain; it reads ILHLERHDSV…WIGRLKRRQI (157 aa). Residue 332–339 coordinates ATP; the sequence is AHTSAGKT. Positions 423–426 match the DEVH box motif; that stretch reads DEVH. Residues 585 to 755 form the Helicase C-terminal domain; the sequence is GLTSLDLTTS…LTYTMILNLL (171 aa).

This sequence belongs to the helicase family. SKI2 subfamily. As to quaternary structure, component of the SKI complex which consists of SKIC2, SKIC3 and SKIC8. Interacts with HBS1L isoform 2.

It localises to the nucleus. The protein localises to the cytoplasm. The enzyme catalyses ATP + H2O = ADP + phosphate + H(+). Its function is as follows. Helicase component of the SKI complex, a multiprotein complex that assists the RNA-degrading exosome during the mRNA decay and quality-control pathways. The SKI complex catalyzes mRNA extraction from 80S ribosomal complexes in the 3'-5' direction and channels mRNA to the cytosolic exosome for degradation. SKI-mediated extraction of mRNA from stalled ribosomes allow binding of the Pelota-HBS1L complex and subsequent ribosome disassembly by ABCE1 for ribosome recycling. In the nucleus, the SKI complex associates with transcriptionally active genes in a manner dependent on PAF1 complex (PAF1C). This Homo sapiens (Human) protein is Superkiller complex protein 2.